The primary structure comprises 128 residues: Glycine cleavage system H protein (128 aa).

Residues 24 to 106 (VYSVGITEHA…YTDGWLFSIK (83 aa)) form the Lipoyl-binding domain. Position 65 is an N6-lipoyllysine (lysine 65).

Belongs to the GcvH family. As to quaternary structure, the glycine cleavage system is composed of four proteins: P, T, L and H. It depends on (R)-lipoate as a cofactor.

Functionally, the glycine cleavage system catalyzes the degradation of glycine. The H protein shuttles the methylamine group of glycine from the P protein to the T protein. The polypeptide is Glycine cleavage system H protein (Yersinia enterocolitica serotype O:8 / biotype 1B (strain NCTC 13174 / 8081)).